The chain runs to 496 residues: Acyltransferase M4 (496 aa).

Residue histidine 163 is the Proton acceptor of the active site.

It belongs to the plant acyltransferase family. Monomer.

It participates in secondary metabolite biosynthesis. In terms of biological role, acyltransferase; part of the gene cluster that mediates the biosynthesis of squalestatin S1 (SQS1, also known as zaragozic acid A), a heavily oxidized fungal polyketide that offers potent cholesterol lowering activity by targeting squalene synthase (SS). SQS1 is composed of a 2,8-dioxobicyclic[3.2.1]octane-3,4,5-tricarboxyclic acid core that is connected to two lipophilic polyketide arms. These initial steps feature the priming of an unusual benzoic acid starter unit onto the highly reducing polyketide synthase pks2, followed by oxaloacetate extension and product release to generate a tricarboxylic acid containing product. The phenylalanine ammonia lyase (PAL) M7 and the acyl-CoA ligase M9 are involved in transforming phenylalanine into benzoyl-CoA. The citrate synthase-like protein R3 is involved in connecting the C-alpha-carbons of the hexaketide chain and oxaloacetate to afford the tricarboxylic acid unit. The potential hydrolytic enzymes, M8 and M10, are in close proximity to pks2 and may participate in product release. On the other side, the tetraketide arm is synthesized by a the squalestatin tetraketide synthase pks1 and enzymatically esterified to the core in the last biosynthetic step, by the acetyltransferase M4. The biosynthesis of the tetraketide must involve 3 rounds of chain extension. After the first and second rounds methyl-transfer occurs, and in all rounds of extension the ketoreductase and dehydratase are active. The enoyl reductase and C-MeT of pks1 are not active in the final round of extension. The acetyltransferase M4 appears to have a broad substrate selectivity for its acyl CoA substrate, allowing the in vitro synthesis of novel squalestatins. The biosynthesis of SQS1 requires several oxidative steps likely performed by oxidoreductases M1, R1 and R2. Finally, in support of the identification of the cluster as being responsible for SQS1 production, the cluster contains a gene encoding a putative squalene synthase (SS) R6, suggesting a likely mechanism for self-resistance. This chain is Acyltransferase M4, found in Phoma sp. (strain ATCC 20986 / MF5453).